The following is a 329-amino-acid chain: MADLLSVLQDKLSGKNVKIVLPEGEDERVLIAATQLQKTDYVSPIVLGNEDNIKSLASKHALDLTQIEIIDPATSELKDELVDAFVERRKGKATKEQAVELLDNVNYFGTMLVYTGKAEGLVSGAAHSTGDTVRPALQIIKTKPGVSRTSGIFFMIKGDEQYIFGDCAINPELDAQGLAEIAVESAKSAQSFGMDPKVAMLSFSTKGSAKSDDVTKVQEALKLAQEKAEADQLDHVVIDGEFQFDAAIVPSVAEKKAPGAKIQGDANVFVFPSLEAGNIGYKIAQRLGGYDAVGPVLQGLNSPVNDLSRGCSTEDVYNLSIITAAQALQ.

It belongs to the phosphate acetyltransferase and butyryltransferase family.

Its subcellular location is the cytoplasm. It carries out the reaction acetyl-CoA + phosphate = acetyl phosphate + CoA. It participates in metabolic intermediate biosynthesis; acetyl-CoA biosynthesis; acetyl-CoA from acetate: step 2/2. This chain is Phosphate acetyltransferase (pta), found in Staphylococcus epidermidis (strain ATCC 12228 / FDA PCI 1200).